Reading from the N-terminus, the 359-residue chain is tRNA-specific 2-thiouridylase MnmA (359 aa).

Residues 6–13 (AMSGGVDS) and L32 contribute to the ATP site. C101 (nucleophile) is an active-site residue. C101 and C193 form a disulfide bridge. G125 contacts ATP. The segment at 143–145 (KDQ) is interaction with tRNA. C193 acts as the Cysteine persulfide intermediate in catalysis.

This sequence belongs to the MnmA/TRMU family.

It localises to the cytoplasm. It catalyses the reaction S-sulfanyl-L-cysteinyl-[protein] + uridine(34) in tRNA + AH2 + ATP = 2-thiouridine(34) in tRNA + L-cysteinyl-[protein] + A + AMP + diphosphate + H(+). Catalyzes the 2-thiolation of uridine at the wobble position (U34) of tRNA, leading to the formation of s(2)U34. In Mycobacterium sp. (strain KMS), this protein is tRNA-specific 2-thiouridylase MnmA.